The chain runs to 87 residues: Small ribosomal subunit protein bS20 (87 aa).

Residues 1–11 (MANIKSAKKRA) show a composition bias toward basic residues. A disordered region spans residues 1–27 (MANIKSAKKRAVQSEKRRQHNASQRSM).

Belongs to the bacterial ribosomal protein bS20 family.

Binds directly to 16S ribosomal RNA. This chain is Small ribosomal subunit protein bS20, found in Histophilus somni (strain 129Pt) (Haemophilus somnus).